Reading from the N-terminus, the 315-residue chain is Archaeosortase A (315 aa).

7 helical membrane-spanning segments follow: residues 12–32, 47–67, 74–94, 173–193, 204–224, 227–247, and 260–280; these read VIPYTDVLAWVVMAAFIAGVA, AGAWWLFAVFWFVLIQHFAFV, TVLILIAVPACLYVGWLVFAG, VVFECTGIGAMSIFGGLIAAV, IALSISIIWVLNIGRNVFIAL, GYQWFAYSWLEGPIMALFGLT, and VLAQLLAVVALAGLAWFIARW. The active-site Acyl-thioester intermediate is C177. R218 (proton donor) is an active-site residue.

This sequence belongs to the exosortase/archaeosortase family. Archaeosortase A subfamily.

It is found in the cell membrane. Functionally, transpeptidase that recognizes and modifies its substrate by proteolytic cleavage of a sorting signal. Following cleavage, a covalent intermediate is formed via a thioester bond between the archaeosortase and its substrate, which is then transferred and covalently attached to the cell membrane. This Natronomonas pharaonis (strain ATCC 35678 / DSM 2160 / CIP 103997 / JCM 8858 / NBRC 14720 / NCIMB 2260 / Gabara) (Halobacterium pharaonis) protein is Archaeosortase A.